The following is a 454-amino-acid chain: Ig mu chain C region (454 aa).

Positions Ser-1 to Val-105 are CH1. Cysteines 27 and 88 form a disulfide. Residues Asn-45, Asn-112, Asn-192, Asn-210, Asn-238, Asn-257, and Asn-280 are each glycosylated (N-linked (GlcNAc...) asparagine). The segment at Val-106–Ser-218 is CH2. Cys-135 and Cys-198 are joined by a disulfide. The interval Pro-219–Glu-324 is CH3. Disulfide bonds link Cys-245-Cys-304 and Cys-352-Cys-414. Residues Met-325 to Tyr-454 are CH4. A glycan (N-linked (GlcNAc...) asparagine) is linked at Asn-441.

This is Ig mu chain C region from Mesocricetus auratus (Golden hamster).